The chain runs to 236 residues: Syntaxin-8 (236 aa).

Residues 1–215 (MAPDPWFSTY…LVDRKSASCG (215 aa)) are Cytoplasmic-facing. Residues 42 to 65 (LTIRTLLKNLKVKIDLLKDLLLRA) are a coiled coil. 2 positions are modified to phosphoserine: Ser-102 and Ser-160. Residues 145–207 (QKIIQEQDAG…RTEARRVTLV (63 aa)) enclose the t-SNARE coiled-coil homology domain. Residues 216–232 (MIMVILLLLVAIVVVAV) traverse the membrane as a helical; Anchor for type IV membrane protein segment. The Vesicular portion of the chain corresponds to 233–236 (WPTN).

The protein belongs to the syntaxin family. In terms of assembly, part of the SNARE core complex containing STX7, VAMP8 and VTI1B. Interacts with VAMP8. Forms a SNARE complex with STX7, VTI1B and VAMP8 which functions in the homotypic fusion of late endosomes. Component of the SNARE complex composed of STX7, STX8, VAMP7 and VTI1B that is required for heterotypic fusion of late endosomes with lysosomes. Interacts with HECTD3. Interacts with TPC1. Ubiquitinated by HECTD3. Widely expressed in all tissues examined.

It localises to the membrane. Vesicle trafficking protein that functions in the early secretory pathway, possibly by mediating retrograde transport from cis-Golgi membranes to the ER. The sequence is that of Syntaxin-8 (Stx8) from Rattus norvegicus (Rat).